The primary structure comprises 252 residues: Triosephosphate isomerase (252 aa).

10–12 (NWK) is a binding site for substrate. The Electrophile role is filled by H96. The active-site Proton acceptor is E168. Substrate is bound by residues G174, S214, and 235–236 (GG).

It belongs to the triosephosphate isomerase family. Homodimer.

Its subcellular location is the cytoplasm. It carries out the reaction D-glyceraldehyde 3-phosphate = dihydroxyacetone phosphate. It participates in carbohydrate biosynthesis; gluconeogenesis. It functions in the pathway carbohydrate degradation; glycolysis; D-glyceraldehyde 3-phosphate from glycerone phosphate: step 1/1. Functionally, involved in the gluconeogenesis. Catalyzes stereospecifically the conversion of dihydroxyacetone phosphate (DHAP) to D-glyceraldehyde-3-phosphate (G3P). This chain is Triosephosphate isomerase, found in Streptococcus pyogenes serotype M5 (strain Manfredo).